An 89-amino-acid chain; its full sequence is Small ribosomal subunit protein uS15 (89 aa).

The protein belongs to the universal ribosomal protein uS15 family. In terms of assembly, part of the 30S ribosomal subunit. Forms a bridge to the 50S subunit in the 70S ribosome, contacting the 23S rRNA.

One of the primary rRNA binding proteins, it binds directly to 16S rRNA where it helps nucleate assembly of the platform of the 30S subunit by binding and bridging several RNA helices of the 16S rRNA. Functionally, forms an intersubunit bridge (bridge B4) with the 23S rRNA of the 50S subunit in the ribosome. In Gloeobacter violaceus (strain ATCC 29082 / PCC 7421), this protein is Small ribosomal subunit protein uS15.